The chain runs to 374 residues: LIM domain-binding protein 1-A (374 aa).

Disordered regions lie at residues Met1–His24, Pro249–Ser297, and Thr322–Gln374. Low complexity predominate over residues Ser267–Ser297. The region spanning Asp299–Glu338 is the LIM interaction domain (LID) domain. Positions Phe341–Gln374 are enriched in polar residues.

This sequence belongs to the LDB family. As to expression, expressed ubiquitously in the embryo and adult.

It localises to the nucleus. In terms of biological role, binds to the LIM domain of a wide variety of LIM domain-containing transcription factors. In Danio rerio (Zebrafish), this protein is LIM domain-binding protein 1-A (ldb1a).